A 171-amino-acid polypeptide reads, in one-letter code: S-ribosylhomocysteine lyase (171 aa).

Fe cation-binding residues include His54, His58, and Cys128.

The protein belongs to the LuxS family. Homodimer. The cofactor is Fe cation.

The catalysed reaction is S-(5-deoxy-D-ribos-5-yl)-L-homocysteine = (S)-4,5-dihydroxypentane-2,3-dione + L-homocysteine. Functionally, involved in the synthesis of autoinducer 2 (AI-2) which is secreted by bacteria and is used to communicate both the cell density and the metabolic potential of the environment. The regulation of gene expression in response to changes in cell density is called quorum sensing. Catalyzes the transformation of S-ribosylhomocysteine (RHC) to homocysteine (HC) and 4,5-dihydroxy-2,3-pentadione (DPD). The chain is S-ribosylhomocysteine lyase from Aliarcobacter butzleri (strain RM4018) (Arcobacter butzleri).